The following is a 183-amino-acid chain: Archaemetzincin (183 aa).

A Zn(2+)-binding site is contributed by His131. Glu132 serves as the catalytic Proton acceptor. His135, His141, Cys142, Cys147, and Cys166 together coordinate Zn(2+).

The protein belongs to the peptidase M54 family. Monomer. It depends on Zn(2+) as a cofactor.

Probable zinc metalloprotease whose natural substrate is unknown. The protein is Archaemetzincin of Saccharolobus solfataricus (strain ATCC 35092 / DSM 1617 / JCM 11322 / P2) (Sulfolobus solfataricus).